We begin with the raw amino-acid sequence, 193 residues long: Potassium-transporting ATPase KdpC subunit (193 aa).

The chain crosses the membrane as a helical span at residues 14–34 (ITFTFLVLCGLVYPLIVTGIA).

This sequence belongs to the KdpC family. In terms of assembly, the system is composed of three essential subunits: KdpA, KdpB and KdpC.

Its subcellular location is the cell membrane. Functionally, part of the high-affinity ATP-driven potassium transport (or Kdp) system, which catalyzes the hydrolysis of ATP coupled with the electrogenic transport of potassium into the cytoplasm. This subunit acts as a catalytic chaperone that increases the ATP-binding affinity of the ATP-hydrolyzing subunit KdpB by the formation of a transient KdpB/KdpC/ATP ternary complex. The polypeptide is Potassium-transporting ATPase KdpC subunit (Bacillus cereus (strain ATCC 14579 / DSM 31 / CCUG 7414 / JCM 2152 / NBRC 15305 / NCIMB 9373 / NCTC 2599 / NRRL B-3711)).